The sequence spans 631 residues: Glutamyl-tRNA(Gln) amidotransferase subunit E (631 aa).

It belongs to the GatB/GatE family. GatE subfamily. In terms of assembly, heterodimer of GatD and GatE.

It catalyses the reaction L-glutamyl-tRNA(Gln) + L-glutamine + ATP + H2O = L-glutaminyl-tRNA(Gln) + L-glutamate + ADP + phosphate + H(+). Functionally, allows the formation of correctly charged Gln-tRNA(Gln) through the transamidation of misacylated Glu-tRNA(Gln) in organisms which lack glutaminyl-tRNA synthetase. The reaction takes place in the presence of glutamine and ATP through an activated gamma-phospho-Glu-tRNA(Gln). The GatDE system is specific for glutamate and does not act on aspartate. This Methanococcus maripaludis (strain DSM 14266 / JCM 13030 / NBRC 101832 / S2 / LL) protein is Glutamyl-tRNA(Gln) amidotransferase subunit E.